The chain runs to 273 residues: MGKTFAVIGDPIDHSLSPNIHSAAFRELNLDCSYIAYRIPKDELGEGIEGLKKIQIAGFNVTIPHKIEMMKYLDKIDESCSLIGAVNTVVSNDGVLKGYNTDMDGFLEPLKKRNIEIENSNVLLLGAGGAARAIVAGFAKEKAKSITIANRTIEKANNLVEFAKKISLDANAITIDQVGESAKDYNIIVNATSIGLQNESSPISFEGVNEKTVVYDIVYLPMNTDFLKKAKEKNATIIFGYEMLLGQAVRAFEIWHGMEAPYNAMKKALLGGF.

Shikimate-binding positions include 15–17 (SLS) and Thr62. Catalysis depends on Lys66, which acts as the Proton acceptor. Glu78 is an NADP(+) binding site. Positions 87 and 102 each coordinate shikimate. Residues 126–130 (GAGGA), 150–155 (NRTIEK), and Ile217 each bind NADP(+). Shikimate is bound at residue Tyr219. Gly240 provides a ligand contact to NADP(+).

It belongs to the shikimate dehydrogenase family. Homodimer.

It catalyses the reaction shikimate + NADP(+) = 3-dehydroshikimate + NADPH + H(+). It functions in the pathway metabolic intermediate biosynthesis; chorismate biosynthesis; chorismate from D-erythrose 4-phosphate and phosphoenolpyruvate: step 4/7. Functionally, involved in the biosynthesis of the chorismate, which leads to the biosynthesis of aromatic amino acids. Catalyzes the reversible NADPH linked reduction of 3-dehydroshikimate (DHSA) to yield shikimate (SA). The chain is Shikimate dehydrogenase (NADP(+)) from Nitrosopumilus maritimus (strain SCM1).